The primary structure comprises 177 residues: Peptide methionine sulfoxide reductase MsrA (177 aa).

Cysteine 15 is an active-site residue.

It belongs to the MsrA Met sulfoxide reductase family.

The enzyme catalyses L-methionyl-[protein] + [thioredoxin]-disulfide + H2O = L-methionyl-(S)-S-oxide-[protein] + [thioredoxin]-dithiol. The catalysed reaction is [thioredoxin]-disulfide + L-methionine + H2O = L-methionine (S)-S-oxide + [thioredoxin]-dithiol. Functionally, has an important function as a repair enzyme for proteins that have been inactivated by oxidation. Catalyzes the reversible oxidation-reduction of methionine sulfoxide in proteins to methionine. The protein is Peptide methionine sulfoxide reductase MsrA of Mycobacterium leprae (strain Br4923).